Consider the following 92-residue polypeptide: Small ribosomal subunit protein uS19 (92 aa).

It belongs to the universal ribosomal protein uS19 family.

Protein S19 forms a complex with S13 that binds strongly to the 16S ribosomal RNA. In Rickettsia africae (strain ESF-5), this protein is Small ribosomal subunit protein uS19.